Consider the following 314-residue polypeptide: Polyamine aminopropyltransferase (314 aa).

A PABS domain is found at 13–249 (WSWFLEWLTP…SMWGFVVASD (237 aa)). Gln-42 lines the S-methyl-5'-thioadenosine pocket. Residues His-73 and Glu-97 each contribute to the spermidine site. S-methyl-5'-thioadenosine is bound by residues Asp-117 and 149–150 (DA). Asp-168 acts as the Proton acceptor in catalysis. An S-methyl-5'-thioadenosine-binding site is contributed by Pro-177.

The protein belongs to the spermidine/spermine synthase family. In terms of assembly, homodimer or homotetramer.

It localises to the cytoplasm. The enzyme catalyses S-adenosyl 3-(methylsulfanyl)propylamine + putrescine = S-methyl-5'-thioadenosine + spermidine + H(+). The protein operates within amine and polyamine biosynthesis; spermidine biosynthesis; spermidine from putrescine: step 1/1. Functionally, catalyzes the irreversible transfer of a propylamine group from the amino donor S-adenosylmethioninamine (decarboxy-AdoMet) to putrescine (1,4-diaminobutane) to yield spermidine. The sequence is that of Polyamine aminopropyltransferase from Aeropyrum pernix (strain ATCC 700893 / DSM 11879 / JCM 9820 / NBRC 100138 / K1).